Consider the following 211-residue polypeptide: Ribosomal RNA small subunit methyltransferase G (211 aa).

S-adenosyl-L-methionine-binding positions include Gly81, Leu86, Val132–Glu133, and Arg147.

It belongs to the methyltransferase superfamily. RNA methyltransferase RsmG family.

It localises to the cytoplasm. The catalysed reaction is guanosine(527) in 16S rRNA + S-adenosyl-L-methionine = N(7)-methylguanosine(527) in 16S rRNA + S-adenosyl-L-homocysteine. Specifically methylates the N7 position of guanine in position 527 of 16S rRNA. This chain is Ribosomal RNA small subunit methyltransferase G, found in Actinobacillus succinogenes (strain ATCC 55618 / DSM 22257 / CCUG 43843 / 130Z).